We begin with the raw amino-acid sequence, 411 residues long: Putative glycosyltransferase SCO3672 (411 aa).

Helical transmembrane passes span isoleucine 7–leucine 27, proline 45–glycine 65, valine 70–leucine 90, glutamate 120–phenylalanine 140, glycine 148–glutamate 168, leucine 169–leucine 189, isoleucine 197–leucine 217, glycine 227–leucine 247, glycine 277–histidine 297, and valine 301–leucine 321.

It belongs to the glycosyltransferase 4 family.

It is found in the cell membrane. The polypeptide is Putative glycosyltransferase SCO3672 (Streptomyces coelicolor (strain ATCC BAA-471 / A3(2) / M145)).